Consider the following 236-residue polypeptide: Small ribosomal subunit protein uS2c (236 aa).

It belongs to the universal ribosomal protein uS2 family.

Its subcellular location is the plastid. The protein resides in the chloroplast. The polypeptide is Small ribosomal subunit protein uS2c (rps2) (Daucus carota (Wild carrot)).